The sequence spans 41 residues: Photosystem I reaction center subunit IX (41 aa).

The chain crosses the membrane as a helical span at residues Y7 to I27.

The protein belongs to the PsaJ family.

Its subcellular location is the plastid. The protein localises to the chloroplast thylakoid membrane. In terms of biological role, may help in the organization of the PsaE and PsaF subunits. In Chara vulgaris (Common stonewort), this protein is Photosystem I reaction center subunit IX.